The following is a 313-amino-acid chain: Malate dehydrogenase (313 aa).

11-16 (GAGHTG) contacts NAD(+). Substrate-binding residues include R86 and R92. NAD(+) contacts are provided by residues N99 and 122-124 (LTN). Residues N124 and R155 each contribute to the substrate site. H179 serves as the catalytic Proton acceptor.

This sequence belongs to the LDH/MDH superfamily. MDH type 3 family.

It carries out the reaction (S)-malate + NAD(+) = oxaloacetate + NADH + H(+). Catalyzes the reversible oxidation of malate to oxaloacetate. The protein is Malate dehydrogenase of Staphylococcus epidermidis (strain ATCC 35984 / DSM 28319 / BCRC 17069 / CCUG 31568 / BM 3577 / RP62A).